Consider the following 121-residue polypeptide: Large ribosomal subunit protein uL18 (121 aa).

This sequence belongs to the universal ribosomal protein uL18 family. In terms of assembly, part of the 50S ribosomal subunit; part of the 5S rRNA/L5/L18/L25 subcomplex. Contacts the 5S and 23S rRNAs.

In terms of biological role, this is one of the proteins that bind and probably mediate the attachment of the 5S RNA into the large ribosomal subunit, where it forms part of the central protuberance. This chain is Large ribosomal subunit protein uL18, found in Paraburkholderia phymatum (strain DSM 17167 / CIP 108236 / LMG 21445 / STM815) (Burkholderia phymatum).